The primary structure comprises 154 residues: Putative pre-16S rRNA nuclease (154 aa).

This sequence belongs to the YqgF nuclease family.

It is found in the cytoplasm. Could be a nuclease involved in processing of the 5'-end of pre-16S rRNA. This Rickettsia africae (strain ESF-5) protein is Putative pre-16S rRNA nuclease.